Here is a 144-residue protein sequence, read N- to C-terminus: Endoribonuclease YbeY (144 aa).

The Zn(2+) site is built by histidine 108, histidine 112, and histidine 118.

This sequence belongs to the endoribonuclease YbeY family. Requires Zn(2+) as cofactor.

Its subcellular location is the cytoplasm. Single strand-specific metallo-endoribonuclease involved in late-stage 70S ribosome quality control and in maturation of the 3' terminus of the 16S rRNA. This chain is Endoribonuclease YbeY, found in Phytoplasma australiense.